A 230-amino-acid polypeptide reads, in one-letter code: Large ribosomal subunit protein uL1 (230 aa).

The protein belongs to the universal ribosomal protein uL1 family. In terms of assembly, part of the 50S ribosomal subunit.

Functionally, binds directly to 23S rRNA. The L1 stalk is quite mobile in the ribosome, and is involved in E site tRNA release. Its function is as follows. Protein L1 is also a translational repressor protein, it controls the translation of the L11 operon by binding to its mRNA. The polypeptide is Large ribosomal subunit protein uL1 (Aster yellows witches'-broom phytoplasma (strain AYWB)).